The following is a 413-amino-acid chain: MITGIKGFNDILPGEVERWQHIEATARRVFGLYGYAEIRVPILEKTELFCRSIGDTTDIVEKEMYSFVDKGENAVTMRPEGTASVMRAYIEHKLYAQDPVAKLYYMGPMFRYERPQKGRYRQFHQIGAEVTGVTDPKVDAQVLTMLCHFFAELGLTEPTLQINSLGCPECRPVYREALKSFLRERLDRLCDDCKRRYETNPLRALDCKSAHCKEATADAPAMLDHLCAGCDDHFAATRRHLERAGTPYSINNRMVRGLDYYTRTTFELVTGLLGAQSAVAAGGRYDGLIADLDGPAVPGIGFAMGVERVALLLGQQEFARRPDLFIAALGTEAQDEAFRLMCGLQRLGVSVEMDYEGKSLKSQMRRSDKFNSRFTLIIGSDEMASGRATLKAMDTGTQSDVLLDPTAIAGQVK.

The protein belongs to the class-II aminoacyl-tRNA synthetase family. In terms of assembly, homodimer.

It is found in the cytoplasm. The enzyme catalyses tRNA(His) + L-histidine + ATP = L-histidyl-tRNA(His) + AMP + diphosphate + H(+). The sequence is that of Histidine--tRNA ligase from Geobacter metallireducens (strain ATCC 53774 / DSM 7210 / GS-15).